The chain runs to 137 residues: Oleosin Ara h 11.0101 (137 aa).

Ala2 bears the N-acetylalanine; alternate mark. Helical transmembrane passes span 27–47 (AVVAGGSLLILAGLVLAGTVI) and 55–75 (LFVIFSPVLVPAVITVALLGL).

This sequence belongs to the oleosin family. As to expression, expressed in seeds (at protein level).

It localises to the lipid droplet. The protein localises to the membrane. May have a structural role to stabilize the lipid body during desiccation of the seed by preventing coalescence of the oil. Probably interacts with both lipid and phospholipid moieties of lipid bodies. May also provide recognition signals for specific lipase anchorage in lipolysis during seedling growth. This chain is Oleosin Ara h 11.0101, found in Arachis hypogaea (Peanut).